Reading from the N-terminus, the 360-residue chain is CCA-adding enzyme (360 aa).

Residues glycine 8 and arginine 11 each contribute to the ATP site. Residues glycine 8 and arginine 11 each contribute to the CTP site. The Mg(2+) site is built by aspartate 21 and aspartate 23. 3 residues coordinate ATP: arginine 91, arginine 137, and arginine 140. Residues arginine 91, arginine 137, and arginine 140 each contribute to the CTP site.

It belongs to the tRNA nucleotidyltransferase/poly(A) polymerase family. Bacterial CCA-adding enzyme type 2 subfamily. The cofactor is Mg(2+).

It catalyses the reaction a tRNA precursor + 2 CTP + ATP = a tRNA with a 3' CCA end + 3 diphosphate. The catalysed reaction is a tRNA with a 3' CCA end + 2 CTP + ATP = a tRNA with a 3' CCACCA end + 3 diphosphate. In terms of biological role, catalyzes the addition and repair of the essential 3'-terminal CCA sequence in tRNAs without using a nucleic acid template. Adds these three nucleotides in the order of C, C, and A to the tRNA nucleotide-73, using CTP and ATP as substrates and producing inorganic pyrophosphate. tRNA 3'-terminal CCA addition is required both for tRNA processing and repair. Also involved in tRNA surveillance by mediating tandem CCA addition to generate a CCACCA at the 3' terminus of unstable tRNAs. While stable tRNAs receive only 3'-terminal CCA, unstable tRNAs are marked with CCACCA and rapidly degraded. In Francisella tularensis subsp. tularensis (strain FSC 198), this protein is CCA-adding enzyme.